We begin with the raw amino-acid sequence, 266 residues long: Bax inhibitor 1 (266 aa).

Residues methionine 1–proline 22 are disordered. The next 7 helical transmembrane spans lie at leucine 70–valine 90, methionine 92–isoleucine 112, isoleucine 123–phenylalanine 143, isoleucine 147–phenylalanine 167, glycine 177–valine 197, proline 201–phenylalanine 221, and leucine 240–leucine 260.

Belongs to the BI1 family. LFG subfamily.

It is found in the endoplasmic reticulum membrane. The protein localises to the mitochondrion membrane. Its subcellular location is the golgi apparatus membrane. The protein resides in the vacuole membrane. Functionally, links the unfolded protein response and programmed cell death and mediates mitochondrial-dependent apoptosis. Induces cell death and disruption of the mitochondrial transmembrane potential. The polypeptide is Bax inhibitor 1 (bxi1) (Schizosaccharomyces pombe (strain 972 / ATCC 24843) (Fission yeast)).